The sequence spans 260 residues: DNA repair protein RecO (260 aa).

The protein belongs to the RecO family.

Functionally, involved in DNA repair and RecF pathway recombination. The protein is DNA repair protein RecO of Chlorobaculum parvum (strain DSM 263 / NCIMB 8327) (Chlorobium vibrioforme subsp. thiosulfatophilum).